The following is a 1456-amino-acid chain: Sterol 3-beta-glucosyltransferase (1456 aa).

Positions 60 to 70 are enriched in acidic residues; the sequence is ESDEEDGDEVE. 2 disordered regions span residues 60–113 and 128–156; these read ESDE…SISH and LSPHSLCHTSSHEASRRGSAEQPSRTQSE. A compositionally biased stretch (low complexity) spans 71-104; that stretch reads TPSTTTTAVSPSATMSAPSPTATAPTPHSGTHTP. Residues 137–146 show a composition bias toward basic and acidic residues; the sequence is SSHEASRRGS. A GRAM 1 domain is found at 200-247; it reads QKLKGFAALDVDEQLIADYPVWLLKNVLIQGHLYITAKHMCFLSYLPR. Residues 251–351 form the PH domain; sequence ANIRSGTLVK…WVKALQKEIF (101 aa). Disordered regions lie at residues 462–512 and 524–776; these read HSAH…PRLP and DKCD…QDTF. Over residues 496–508 the composition is skewed to basic and acidic residues; that stretch reads QPHERDEKRDSKL. Positions 556-567 are enriched in polar residues; the sequence is LASQRTSSSTLF. 2 stretches are compositionally biased toward low complexity: residues 576 to 606 and 647 to 676; these read SQPTTPGVHAPGSSTPGGSYGTTTPGTPASA and GGATSSGAATGATTPGGAAAPGSTGNSSPG. Positions 677–696 are enriched in gly residues; it reads TPGGLGGPGAVGAGGPGVMG. A compositionally biased stretch (low complexity) spans 719–735; sequence APHDPAAAAAAADAAAP. A GRAM 2 domain is found at 827–893; that stretch reads ERFQKRFALG…KVVENATKDS (67 aa). 12 residues coordinate UDP-alpha-D-glucose: S1004, R1005, D1007, N1279, N1307, H1310, H1323, S1326, G1327, T1328, D1347, and Q1348.

The protein belongs to the glycosyltransferase 28 family.

It is found in the cytoplasm. The protein resides in the membrane. The enzyme catalyses a sterol + UDP-alpha-D-glucose = a sterol 3-beta-D-glucoside + UDP + H(+). The catalysed reaction is ergosterol + UDP-alpha-D-glucose = ergosteryl 3-beta-D-glucoside + UDP + H(+). Functionally, sterol glycosyltransferase responsible for the glycosylation of ergosterol to form ergosterol-glucoside. In Yarrowia lipolytica (strain CLIB 122 / E 150) (Yeast), this protein is Sterol 3-beta-glucosyltransferase.